Consider the following 406-residue polypeptide: Protein transport protein HofC homolog (406 aa).

3 helical membrane passes run 167-187 (MVLG…VPQF), 214-234 (QNIG…YFYL), and 379-399 (MMVI…LPIF).

This sequence belongs to the GSP F family.

Its subcellular location is the cell inner membrane. This Haemophilus influenzae (strain ATCC 51907 / DSM 11121 / KW20 / Rd) protein is Protein transport protein HofC homolog (hofC).